We begin with the raw amino-acid sequence, 255 residues long: ATP synthase subunit a (255 aa).

6 consecutive transmembrane segments (helical) span residues T40 to V60, L109 to V129, N135 to L155, V163 to I183, L196 to V218, and I230 to E250.

The protein belongs to the ATPase A chain family. F-type ATPases have 2 components, CF(1) - the catalytic core - and CF(0) - the membrane proton channel. CF(1) has five subunits: alpha(3), beta(3), gamma(1), delta(1), epsilon(1). CF(0) has three main subunits: a(1), b(2) and c(9-12). The alpha and beta chains form an alternating ring which encloses part of the gamma chain. CF(1) is attached to CF(0) by a central stalk formed by the gamma and epsilon chains, while a peripheral stalk is formed by the delta and b chains.

It is found in the cell inner membrane. Its function is as follows. Key component of the proton channel; it plays a direct role in the translocation of protons across the membrane. The protein is ATP synthase subunit a of Sorangium cellulosum (strain So ce56) (Polyangium cellulosum (strain So ce56)).